Reading from the N-terminus, the 2925-residue chain is TPR and ankyrin repeat-containing protein 1 (2925 aa).

TPR repeat units follow at residues 15–48 and 50–82; these read AVLLCNKSNAFFSLGKWNEAFVAAKECLQWDPTY and KGYYRAGYSLLRLHQPYEAARMFFEGLRLVQRS. 6 ANK repeats span residues 168-198, 203-232, 240-276, 463-492, 497-518, and 546-575; these read EKYVFIGLYEKMEQVPKLVQWLISIGASVET, PLHALMRLCIQARENHLFRWLMDHKPEWKG, DGCTVLHVVAAHSPGYLVKRQTEDVQMLLRFGADPTL, SQERPVVTCLKHEDFELAFLLLTKGADPRA, EGDTPLHAALHIFLEIKADIGF, and NGNTLMHILFQKGMLKRVKKLLDLLVKFDI. Disordered stretches follow at residues 612–669, 706–741, and 1077–1103; these read SRQD…LPGT, PEDCLQSSEPLEAGAGKEGKKDDKPTLGAGAPDCSE, and VEPGKESPGGEEEEEEEDEEEEDSIEV. A compositionally biased stretch (polar residues) spans 624-641; sequence SKSTAPGHTSQLKSQGSF. The segment covering 720–730 has biased composition (basic and acidic residues); it reads AGKEGKKDDKP. Residues 1085-1103 show a composition bias toward acidic residues; the sequence is GGEEEEEEEDEEEEDSIEV. TPR repeat units follow at residues 1699-1732 and 1793-1826; these read PAEWIAQGDYYAKHQCWKVAAKCYQKGGAFEKEK and LGKIRDAAYFYKRSQCYKDAFRCFEQIQEFDLAL. Residues 2301–2330 adopt a coiled-coil conformation; the sequence is EEFEKLLHQEEDNYNRELKALESEKDERGR.

This Homo sapiens (Human) protein is TPR and ankyrin repeat-containing protein 1 (TRANK1).